A 496-amino-acid polypeptide reads, in one-letter code: Cytochrome P450 71D178 (496 aa).

A helical; Signal-anchor for type II membrane protein transmembrane segment spans residues 1-21 (MDISISWVVIILLVLSYLILM). Heme is bound at residue cysteine 435.

The protein belongs to the cytochrome P450 family. Requires heme as cofactor. As to expression, expressed in flowers, leaves and stems, especially in glandular trichomes.

Its subcellular location is the membrane. The enzyme catalyses (4S)-limonene + reduced [NADPH--hemoprotein reductase] + O2 = (1S,5R)-carveol + oxidized [NADPH--hemoprotein reductase] + H2O + H(+). It catalyses the reaction gamma-terpinene + 2 reduced [NADPH--hemoprotein reductase] + 2 O2 = carvacrol + 2 oxidized [NADPH--hemoprotein reductase] + 3 H2O + 2 H(+). It carries out the reaction gamma-terpinene + 2 reduced [NADPH--hemoprotein reductase] + 2 O2 = thymol + 2 oxidized [NADPH--hemoprotein reductase] + 3 H2O + 2 H(+). The catalysed reaction is (4R)-limonene + reduced [NADPH--hemoprotein reductase] + O2 = (1R,6S)-isopiperitenol + oxidized [NADPH--hemoprotein reductase] + H2O + H(+). Its pathway is secondary metabolite biosynthesis; terpenoid biosynthesis. Functionally, involved in the biosynthesis of phenolic monoterpenes natural products thymol and carvacrol which have a broad range of biological activities acting as antimicrobial compounds, insecticides, antioxidants and pharmaceutical agents. Catalyzes the C2- and C3-hydroxylation of gamma-terpinene to produce carvacrol and thymol, respectively. Also mediates the C6-hydroxylation of (4S)-limonene to form carveol and the C3-hydroxylation of (4R)-limonene to generate (+)-trans-isopiperitenol. The polypeptide is Cytochrome P450 71D178 (Origanum vulgare (Wild marjoram)).